The primary structure comprises 450 residues: Endosomal transmembrane epsin interactor 1 (450 aa).

Residues 1–29 form the signal peptide; it reads MILLVNLFVLLSVVCVLLNLAGFILGCQG. Over 30–85 the chain is Lumenal; it reads AQFVSSVPRCDLVDLGEGKICFCCEEFQPAKCTDKENALKLFPVQPCSAVHLLLKK. The chain crosses the membrane as a helical span at residues 86–106; sequence VLFALCALNALTTTVCLVAAA. The Cytoplasmic portion of the chain corresponds to 107–450; that stretch reads LRYLQIFATR…LIGVIRETVL (344 aa). The interval 107–450 is mediates interaction with EPN1; the sequence is LRYLQIFATR…LIGVIRETVL (344 aa). Short sequence motifs (PPxY; mediates interaction with ITCH) lie at residues 148–151 and 194–197; these read PPSY and PPPY. The interval 235–284 is disordered; that stretch reads DGDIPNIPAEENASTSTPSSTLVRPIRSRRALPPLRTRSKSDPVLHPSEE. Over residues 246–256 the composition is skewed to polar residues; the sequence is NASTSTPSSTL. The span at 273–284 shows a compositional bias: basic and acidic residues; it reads SKSDPVLHPSEE. K274 is covalently cross-linked (Glycyl lysine isopeptide (Lys-Gly) (interchain with G-Cter in ubiquitin)). At S275 the chain carries Phosphoserine. Glycyl lysine isopeptide (Lys-Gly) (interchain with G-Cter in ubiquitin) cross-links involve residues K329 and K365.

This sequence belongs to the ENTREP family. Interacts with ITCH; enhances the ubiquitination of CXCR4 by ITCH and the subsequent endocytosis and desensitization of the receptor. Interacts with EPN1. Post-translationally, monoubiquitinated at Lys-274, Lys-329 and Lys-365 by ITCH. As to expression, prominently expressed in muscle.

The protein resides in the early endosome membrane. It is found in the late endosome membrane. The protein localises to the recycling endosome membrane. It localises to the cell membrane. Its function is as follows. Functions as an activator of the E3 ubiquitin protein ligase ITCH in the ubiquitination of the CXCL12-activated CXCR4 receptor. Thereby, triggers CXCR4 endocytosis and desensitization, negatively regulating the CXCL12/CXCR4 signaling pathway. The chain is Endosomal transmembrane epsin interactor 1 from Homo sapiens (Human).